A 264-amino-acid chain; its full sequence is PDZ domain-containing protein 9 (264 aa).

In terms of domain architecture, PDZ spans 30 to 109 (QTKLTVGSLG…GTVLQIKVYR (80 aa)).

The protein is PDZ domain-containing protein 9 (PDZD9) of Homo sapiens (Human).